A 148-amino-acid chain; its full sequence is UPF0756 membrane protein KPK_3307 (148 aa).

A run of 4 helical transmembrane segments spans residues A14–V34, L51–L71, L86–M106, and V121–I141.

Belongs to the UPF0756 family.

The protein localises to the cell membrane. The chain is UPF0756 membrane protein KPK_3307 from Klebsiella pneumoniae (strain 342).